A 255-amino-acid chain; its full sequence is MSDYIVVKCGGSMLNQLNAVFFDCIKKLQQKYKVVIIHGGGPEIDAKLKDCNINVEKRDGLRVTPKEVMDVVQMVLCGSTNKKLVMNLQKHNLLAVGCSGCDGNLLQVQPVSEEIGYVGEVSYVETALLKGLINMGYIPVIAPIGVNGNEIYNINADNAAAGIAAALGAKELIFITDVDGILHEGNLVKETDESEIATFIETGVITGGMIPKVQAALASLKMGVQKISIVNGTKDFTEVTGECIGTTVTKGVSIA.

Substrate contacts are provided by residues 40-41 (GG), Arg-62, and Asn-153.

It belongs to the acetylglutamate kinase family. ArgB subfamily.

The protein resides in the cytoplasm. It catalyses the reaction N-acetyl-L-glutamate + ATP = N-acetyl-L-glutamyl 5-phosphate + ADP. It functions in the pathway amino-acid biosynthesis; L-arginine biosynthesis; N(2)-acetyl-L-ornithine from L-glutamate: step 2/4. Its function is as follows. Catalyzes the ATP-dependent phosphorylation of N-acetyl-L-glutamate. This is Acetylglutamate kinase from Bacillus cereus (strain G9842).